Here is a 415-residue protein sequence, read N- to C-terminus: MFS-type transporter FVEG_12626 (415 aa).

Residues 1-18 show a composition bias toward basic and acidic residues; the sequence is MDPDTEQMRVEKPNHEQP. Residues 1–22 are disordered; the sequence is MDPDTEQMRVEKPNHEQPKPNT. Helical transmembrane passes span 27 to 47, 63 to 83, 93 to 113, 118 to 138, 151 to 171, and 178 to 198; these read GGFK…VGVF, TVSW…PFVG, YLLL…SISS, YILS…YPSF, LALG…PIVV, and IGFG…LLVT. A glycan (N-linked (GlcNAc...) asparagine) is linked at asparagine 199. The next 6 membrane-spanning stretches (helical) occupy residues 227–247, 264–284, 290–310, 318–338, 354–374, and 386–406; these read FILT…PITF, YLVS…GYIA, FNVS…LWLP, IAFA…SPAL, TMYA…GALI, and VFAG…RLYI.

The protein belongs to the major facilitator superfamily. Monocarboxylate porter (TC 2.A.1.13) family.

Its subcellular location is the membrane. MFS-type transporter; part of the Fusarium detoxification of benzoxazolinone cluster 2 (FDB2) involved in the degradation of benzoxazolinones produced by the host plant. Maize, wheat, and rye produce the 2 benzoxazinone phytoanticipins 2,4-dihy-droxy-7-methoxy-1,4-benzoxazin-3-one (DIMBOA) and 2,4-dihydroxy-1,4-benzoxazin-3-one (DIBOA) that, due to their inherent instability once released, spontaneously degrade to the more stable corresponding benzoxazolinones, 6-methoxy-2-benzoxazolinone (MBOA) and 2-benzoxazolinone (BOA), respectively. The chain is MFS-type transporter FVEG_12626 from Gibberella moniliformis (strain M3125 / FGSC 7600) (Maize ear and stalk rot fungus).